Here is a 219-residue protein sequence, read N- to C-terminus: MSESLVIRQLGLQPYERVSFAMHRFTDARSTASADEIWLVQHPQVFTQGQAGKAEHLLQPGAIPVVQSDRGGQVTFHGPGQQVMYVLLDLRRRRLGVRSLVTLLEQTIVATLACFSISAHARTDAPGVYIGADKICSLGLRIRKGCSFHGLALNVAMDLSPFLRINPCGYAGLRMTQVSDLAPGTGIDDVAPVLLAECLRLMKASAGEIQGWDPAYYGT.

The BPL/LPL catalytic domain maps to 31-206 (TASADEIWLV…ECLRLMKASA (176 aa)). Substrate-binding positions include 70–77 (RGGQVTFH), 137–139 (SLG), and 150–152 (GLA). Cysteine 168 functions as the Acyl-thioester intermediate in the catalytic mechanism.

The protein belongs to the LipB family.

The protein resides in the cytoplasm. It carries out the reaction octanoyl-[ACP] + L-lysyl-[protein] = N(6)-octanoyl-L-lysyl-[protein] + holo-[ACP] + H(+). The protein operates within protein modification; protein lipoylation via endogenous pathway; protein N(6)-(lipoyl)lysine from octanoyl-[acyl-carrier-protein]: step 1/2. Catalyzes the transfer of endogenously produced octanoic acid from octanoyl-acyl-carrier-protein onto the lipoyl domains of lipoate-dependent enzymes. Lipoyl-ACP can also act as a substrate although octanoyl-ACP is likely to be the physiological substrate. The chain is Octanoyltransferase from Sodalis glossinidius (strain morsitans).